The following is a 277-amino-acid chain: Urease accessory protein UreD (277 aa).

Belongs to the UreD family. As to quaternary structure, ureD, UreF and UreG form a complex that acts as a GTP-hydrolysis-dependent molecular chaperone, activating the urease apoprotein by helping to assemble the nickel containing metallocenter of UreC. The UreE protein probably delivers the nickel.

The protein localises to the cytoplasm. In terms of biological role, required for maturation of urease via the functional incorporation of the urease nickel metallocenter. This chain is Urease accessory protein UreD, found in Sinorhizobium medicae (strain WSM419) (Ensifer medicae).